We begin with the raw amino-acid sequence, 75 residues long: Peptide Ctri9610 (75 aa).

The signal sequence occupies residues 1–22; it reads MNSKYLFVFLILNVIFIDLCQG. Lysine amide is present on K41. A propeptide spanning residues 42 to 75 is cleaved from the precursor; sequence GTRRRELGSQYDYLQDFRKRELDLDDLLSKFPDY.

This sequence belongs to the non-disulfide-bridged peptide (NDBP) superfamily. Short antimicrobial peptide (group 4) family. As to expression, expressed by the venom gland.

It localises to the secreted. The polypeptide is Peptide Ctri9610 (Chaerilus tricostatus (Scorpion)).